Consider the following 346-residue polypeptide: Trans-enoyl reductase FFUJ_12240 (346 aa).

Residue 40–43 (HDAK) coordinates NADP(+). 124 to 131 (LAIATAGL) provides a ligand contact to substrate. NADP(+) contacts are provided by residues 157–160 (ATAT), 180–183 (SPSN), Y198, and 245–246 (LE). A substrate-binding site is contributed by 266-270 (APSIL). Residue 335 to 336 (VH) participates in NADP(+) binding.

Belongs to the zinc-containing alcohol dehydrogenase family.

Trans-enoyl reductase; part of the gene cluster that mediates the biosynthesis of fujikurins A-D, secondary metabolites playing a role during rice infection. The polyketide synthase PKS19 acts with the trans-enoyl reductase FFUJ_12240 and the polyketide transferase FFUJ_12241 to produce fujikurins, however, the biosynthesis pathway has not been identified yet. The polypeptide is Trans-enoyl reductase FFUJ_12240 (Gibberella fujikuroi (strain CBS 195.34 / IMI 58289 / NRRL A-6831) (Bakanae and foot rot disease fungus)).